The primary structure comprises 426 residues: Glutamyl-tRNA reductase (426 aa).

Residues 50-53 (TCNR), S108, 113-115 (EPQ), and Q119 contribute to the substrate site. Residue C51 is the Nucleophile of the active site. 188 to 193 (GAGEMI) is a binding site for NADP(+).

Belongs to the glutamyl-tRNA reductase family. As to quaternary structure, homodimer.

The catalysed reaction is (S)-4-amino-5-oxopentanoate + tRNA(Glu) + NADP(+) = L-glutamyl-tRNA(Glu) + NADPH + H(+). It participates in porphyrin-containing compound metabolism; protoporphyrin-IX biosynthesis; 5-aminolevulinate from L-glutamyl-tRNA(Glu): step 1/2. Catalyzes the NADPH-dependent reduction of glutamyl-tRNA(Glu) to glutamate 1-semialdehyde (GSA). The sequence is that of Glutamyl-tRNA reductase from Polaromonas sp. (strain JS666 / ATCC BAA-500).